The following is a 235-amino-acid chain: Exosome complex component Rrp4 (235 aa).

Residues 63-137 (GDLVIGYVTD…DEYPIILTLK (75 aa)) form the S1 motif domain. The 57-residue stretch at 147 to 203 (GTVVEITPVKVPRVIGKRGSMLNTLMELGCDIVVGQNGRIWVKCKDPRDEVFLASLI) folds into the KH domain.

The protein belongs to the RRP4 family. Component of the archaeal exosome complex. Forms a trimer of Rrp4 and/or Csl4 subunits. The trimer associates with a hexameric ring-like arrangement composed of 3 Rrp41-Rrp42 heterodimers.

Its subcellular location is the cytoplasm. Functionally, non-catalytic component of the exosome, which is a complex involved in RNA degradation. Increases the RNA binding and the efficiency of RNA degradation. Confers strong poly(A) specificity to the exosome. In Pyrobaculum aerophilum (strain ATCC 51768 / DSM 7523 / JCM 9630 / CIP 104966 / NBRC 100827 / IM2), this protein is Exosome complex component Rrp4.